A 579-amino-acid polypeptide reads, in one-letter code: Arginine--tRNA ligase (579 aa).

Positions 123–133 (PNLAKEMHVGH) match the 'HIGH' region motif.

Belongs to the class-I aminoacyl-tRNA synthetase family. In terms of assembly, monomer.

It is found in the cytoplasm. The enzyme catalyses tRNA(Arg) + L-arginine + ATP = L-arginyl-tRNA(Arg) + AMP + diphosphate. The chain is Arginine--tRNA ligase from Saccharophagus degradans (strain 2-40 / ATCC 43961 / DSM 17024).